Consider the following 350-residue polypeptide: Lipase chaperone (350 aa).

A helical transmembrane segment spans residues 12–32 (IVLYLILGCVVVCGVWYSFDV).

Belongs to the lipase chaperone family.

The protein resides in the cell inner membrane. May be involved in the folding of the extracellular lipase during its passage through the periplasm. The polypeptide is Lipase chaperone (lifO) (Xylella fastidiosa (strain 9a5c)).